Here is a 158-residue protein sequence, read N- to C-terminus: 3-hydroxyacyl-[acyl-carrier-protein] dehydratase FabZ (158 aa).

H57 is an active-site residue.

It belongs to the thioester dehydratase family. FabZ subfamily.

The protein resides in the cytoplasm. The enzyme catalyses a (3R)-hydroxyacyl-[ACP] = a (2E)-enoyl-[ACP] + H2O. Involved in unsaturated fatty acids biosynthesis. Catalyzes the dehydration of short chain beta-hydroxyacyl-ACPs and long chain saturated and unsaturated beta-hydroxyacyl-ACPs. The sequence is that of 3-hydroxyacyl-[acyl-carrier-protein] dehydratase FabZ from Helicobacter acinonychis (strain Sheeba).